The sequence spans 502 residues: MTEKKYIVALDQGTTSSRAVVMDHDANIISVSQREFEQIYPKPGWVEHDPMEIWATQSSTLVEVLAKADISSDQIAAIGITNQRETTIVWEKETGKPIYNAIVWQCRRTAEICEHLKRDGLEDYIRSNTGLVLDPYFSGTKVKWILDHVEGSHERARRGELLFGTVDTWLIWKMTQGRVHVTDYTNASRTMLFNIHTLDWDDKMLEVLDIPREMLPEVRRSSEVYGQTNIGGKGGTRIPISGIAGDQQAALFGQLCVKEGMAKNTYGTGCFMLMNTGEKAVKSENGLLTTIACGPTGEVNYALEGAVFMAGASIQWLRDEMKLINDAYDSEYFATKVQNTNGVYVVPAFTGLGAPYWDPYARGAIFGLTRGVNANHIIRATLESIAYQTRDVLEAMQADSGIRLHALRVDGGAVANNFLMQFQSDILGTRVERPEVREVTALGAAYLAGLAVGFWQNLDELQEKAVIEREFRPGIETTERNYRYAGWKKAVKRAMAWEEHDE.

Threonine 14 contacts ADP. Residues threonine 14, threonine 15, and serine 16 each contribute to the ATP site. Position 14 (threonine 14) interacts with sn-glycerol 3-phosphate. An ADP-binding site is contributed by arginine 18. Sn-glycerol 3-phosphate contacts are provided by arginine 84, glutamate 85, tyrosine 136, and aspartate 246. Arginine 84, glutamate 85, tyrosine 136, aspartate 246, and glutamine 247 together coordinate glycerol. ADP is bound by residues threonine 268 and glycine 311. ATP-binding residues include threonine 268, glycine 311, glutamine 315, and glycine 412. The ADP site is built by glycine 412 and asparagine 416.

Belongs to the FGGY kinase family. Homotetramer and homodimer (in equilibrium). Heterodimer with EIIA-Glc. Binds 1 zinc ion per glycerol kinase EIIA-Glc dimer. The zinc ion is important for dimerization.

It catalyses the reaction glycerol + ATP = sn-glycerol 3-phosphate + ADP + H(+). Its pathway is polyol metabolism; glycerol degradation via glycerol kinase pathway; sn-glycerol 3-phosphate from glycerol: step 1/1. Activity of this regulatory enzyme is affected by several metabolites. Allosterically and non-competitively inhibited by fructose 1,6-bisphosphate (FBP) and unphosphorylated phosphocarrier protein EIIA-Glc (III-Glc), an integral component of the bacterial phosphotransferase (PTS) system. In terms of biological role, key enzyme in the regulation of glycerol uptake and metabolism. Catalyzes the phosphorylation of glycerol to yield sn-glycerol 3-phosphate. The protein is Glycerol kinase of Shigella flexneri.